A 110-amino-acid polypeptide reads, in one-letter code: Large ribosomal subunit protein uL22 (110 aa).

The protein belongs to the universal ribosomal protein uL22 family. Part of the 50S ribosomal subunit.

Its function is as follows. This protein binds specifically to 23S rRNA; its binding is stimulated by other ribosomal proteins, e.g. L4, L17, and L20. It is important during the early stages of 50S assembly. It makes multiple contacts with different domains of the 23S rRNA in the assembled 50S subunit and ribosome. The globular domain of the protein is located near the polypeptide exit tunnel on the outside of the subunit, while an extended beta-hairpin is found that lines the wall of the exit tunnel in the center of the 70S ribosome. The chain is Large ribosomal subunit protein uL22 from Desulfotalea psychrophila (strain LSv54 / DSM 12343).